A 173-amino-acid polypeptide reads, in one-letter code: MTYFVLFLGLCFVLGGLAVASNPSPYYGVVGLVLASVAGCGWLLSLGASFVSLVLFMVYLGGMLVVFVYSVSLAADPFPEAWGDWRVIGYGMGFIVVLVVGVVISGFVEYWNFGVVTVDSVGMFSVRLDFSGVAMFYSWGVGMFLAAGWGLLLTLFVVLELVRGLSRGAIRAV.

A run of 5 helical transmembrane segments spans residues 1-21 (MTYF…AVAS), 27-47 (YGVV…LSLG), 48-68 (ASFV…VVFV), 87-107 (VIGY…ISGF), and 139-159 (WGVG…FVVL).

This sequence belongs to the complex I subunit 6 family.

It is found in the mitochondrion membrane. The catalysed reaction is a ubiquinone + NADH + 5 H(+)(in) = a ubiquinol + NAD(+) + 4 H(+)(out). Functionally, core subunit of the mitochondrial membrane respiratory chain NADH dehydrogenase (Complex I) that is believed to belong to the minimal assembly required for catalysis. Complex I functions in the transfer of electrons from NADH to the respiratory chain. The immediate electron acceptor for the enzyme is believed to be ubiquinone. The protein is NADH-ubiquinone oxidoreductase chain 6 (MT-ND6) of Brachyramphus marmoratus (Marbled murrelet).